The primary structure comprises 109 residues: MMRGGMGNMNNMMKQMQKMQKDMAKAQEELGEKTVEGTAGGGMITVIANGHKQILEVKIKEEVVDPEDIEMLQDLVLAATNDALKKADELSNSTMGKFTKGLNLPGGMF.

It belongs to the YbaB/EbfC family. In terms of assembly, homodimer.

The protein localises to the cytoplasm. Its subcellular location is the nucleoid. Functionally, binds to DNA and alters its conformation. May be involved in regulation of gene expression, nucleoid organization and DNA protection. The protein is Nucleoid-associated protein BCB4264_A0025 of Bacillus cereus (strain B4264).